The sequence spans 795 residues: Glycerol-3-phosphate acyltransferase 2, mitochondrial (795 aa).

Residues methionine 1 to glutamate 21 are disordered. The Cytoplasmic segment spans residues methionine 1–glutamine 305. Over residues cysteine 9–serine 18 the composition is skewed to polar residues. The tract at residues glutamine 180 to threonine 331 is acyltransferase. Positions histidine 205–aspartate 210 match the HXXXXD motif motif. A helical membrane pass occupies residues alanine 306–tyrosine 332. Residues aspartate 333–histidine 449 lie on the Mitochondrial intermembrane side of the membrane. A helical membrane pass occupies residues valine 450–phenylalanine 472. The Cytoplasmic portion of the chain corresponds to lysine 473–serine 795. At serine 656 the chain carries Phosphoserine. A Phosphothreonine modification is found at threonine 660. Serine 662 and serine 664 each carry phosphoserine.

It belongs to the GPAT/DAPAT family. Interacts with PIWIL2.

It is found in the mitochondrion outer membrane. It carries out the reaction sn-glycerol 3-phosphate + an acyl-CoA = a 1-acyl-sn-glycero-3-phosphate + CoA. It catalyses the reaction a 1-acyl-sn-glycero-3-phosphate + an acyl-CoA = a 1,2-diacyl-sn-glycero-3-phosphate + CoA. The catalysed reaction is 1-(9Z-octadecenoyl)-sn-glycero-3-phosphate + (9Z)-octadecenoyl-CoA = 1,2-di-(9Z-octadecenoyl)-sn-glycero-3-phosphate + CoA. The enzyme catalyses 1-(9Z-octadecenoyl)-sn-glycero-3-phosphate + (5Z,8Z,11Z,14Z)-eicosatetraenoyl-CoA = 1-(9Z)-octadecenoyl-2-(5Z,8Z,11Z,14Z)-eicosatetraenoyl-sn-glycero-3-phosphate + CoA. It carries out the reaction (5Z,8Z,11Z,14Z)-eicosatetraenoyl-CoA + sn-glycerol 3-phosphate = 1-(5Z,8Z,11Z,14Z-eicosatetraenoyl)-sn-glycero-3-phosphate + CoA. It participates in phospholipid metabolism; CDP-diacylglycerol biosynthesis; CDP-diacylglycerol from sn-glycerol 3-phosphate: step 1/3. Its activity is regulated as follows. Inhibited by N-ethylmaleimide (NEM). Functionally, transfers an acyl-group from acyl-ACP to the sn-1 position of glycerol-3-phosphate producing a lysophosphatidic acid (LPA), an essential step for the triacylglycerol (TAG) and glycerophospholipids. In vitro also transfers an acyl-group from acyl-ACP to the LPA producing a phosphatidic acid (PA). Prefers arachidonoyl-CoA as the acyl donor. Required for primary processing step during piRNA biosynthesis. Molecular mechanisms by which it promotes piRNA biosynthesis are unclear and do not involve its acyltransferase activity. In Homo sapiens (Human), this protein is Glycerol-3-phosphate acyltransferase 2, mitochondrial.